We begin with the raw amino-acid sequence, 732 residues long: Cullin-3A (732 aa).

The Cullin neddylation domain occupies 662–724 (DRKPQIEAAI…RDFLERDSTD (63 aa)). Lysine 676 is covalently cross-linked (Glycyl lysine isopeptide (Lys-Gly) (interchain with G-Cter in NEDD8)).

It belongs to the cullin family. As to quaternary structure, interacts with CSN2 and RBX1A. Interacts with BTB/POZ domain-containing proteins BPM1, BPM2, BPM3, BPM6, BT1, BT2, BT3, BT5, AT1G01640, AT1G21780 and AT5G48510. Interacts with SR1IP1. Interacts with NPR3 and NPR4. Binds to NPR1; this interaction requires NPR3 and NPR4. Post-translationally, neddylated. Deneddylated via its interaction with the COP9 signalosome (CSN) complex.

Component of the cullin-RING ubiquitin ligases (CRL), or CUL3-RBX1-BTB protein E3 ligase complexes which mediate the ubiquitination and subsequent proteasomal degradation of target proteins. The functional specificity of the CRL complex depends on the BTB domain-containing protein as the substrate recognition component. Involved in embryo pattern formation and endosperm development. Required for the normal division and organization of the root stem cells and columella root cap cells. Regulates primary root growth by an unknown pathway, but in an ethylene-dependent manner. Functions in distal root patterning, by an ethylene-independent mechanism. Functionally redundant with CUL3B. The chain is Cullin-3A from Arabidopsis thaliana (Mouse-ear cress).